A 397-amino-acid polypeptide reads, in one-letter code: 42.8 kDa protein in whiE locus (397 aa).

Positions 1-22 are disordered; that stretch reads MTVSPVVATDAPSTDATRTTAT. Low complexity predominate over residues 8-22; the sequence is ATDAPSTDATRTTAT. Residues 46 to 137 form the ABM domain; the sequence is VRVVLMLDVH…DTHSLRYSVL (92 aa).

Belongs to the SchA/CurD family.

In Streptomyces coelicolor (strain ATCC BAA-471 / A3(2) / M145), this protein is 42.8 kDa protein in whiE locus.